We begin with the raw amino-acid sequence, 77 residues long: Dermatoxin-A1 (77 aa).

A signal peptide spans methionine 1 to cysteine 22. A propeptide spanning residues glutamate 23–glutamate 42 is cleaved from the precursor. Position 76 is a glutamine amide (glutamine 76).

Belongs to the frog skin active peptide (FSAP) family. Dermatoxin subfamily. Expressed by the skin glands.

The protein resides in the secreted. Possesses a potent antimicrobial activity against Gram-positive and Gram-negative bacteria. Probably acts by disturbing membrane functions with its amphipathic structure. The sequence is that of Dermatoxin-A1 from Agalychnis annae (Blue-sided leaf frog).